The sequence spans 842 residues: Probable vinculin (842 aa).

Residues 585 to 679 (KEARKRLDDV…AAEEEERKRA (95 aa)) adopt a coiled-coil conformation.

It belongs to the vinculin/alpha-catenin family. As to quaternary structure, monomer. Associates with F-actin. Interacts with aarA, ctxA, ctxB and rgaA. Epithelium.

It is found in the cytoplasm. The protein localises to the cell cortex. Its subcellular location is the cell junction. Its function is as follows. Involved in cell adhesion. Thought to play an important role in cytokinesis B, probably by providing substrate adhesion and traction forces. Required to organize and polarize the tip epithelium during cytokinesis. Required for the normal distribution of myosin in the tip epithelium. Involved in the localization of ctxA, ctxB, dcsA, exoc6 and rgaA. Thought to form a complex with ctxA, ctxB, and rgaA which regulates myosin accumulation to the apical plasma membrane. This is Probable vinculin (ctnnA) from Dictyostelium discoideum (Social amoeba).